Consider the following 66-residue polypeptide: Putative alpha-neurotoxin RjAa13 (66 aa).

The LCN-type CS-alpha/beta domain maps to 1–60 (KEGYPVDWGNCKYECMSDAYCKDLCVDRKAKSGYCYKLNWSCYCEGLPDDSPIKTNGHCR). Disulfide bonds link Cys-11/Cys-59, Cys-15/Cys-35, Cys-21/Cys-42, and Cys-25/Cys-44.

This sequence belongs to the long (4 C-C) scorpion toxin superfamily. Sodium channel inhibitor family. Alpha subfamily. As to expression, expressed by the venom gland.

The protein localises to the secreted. Alpha toxins bind voltage-independently at site-3 of sodium channels (Nav) and inhibits the inactivation of the activated channels, thereby blocking neuronal transmission. The protein is Putative alpha-neurotoxin RjAa13 of Rhopalurus junceus (Caribbean blue scorpion).